A 523-amino-acid polypeptide reads, in one-letter code: 2-isopropylmalate synthase (523 aa).

In terms of domain architecture, Pyruvate carboxyltransferase spans 5–267; the sequence is VIIFDTTLRD…HTAINHQEIW (263 aa). Mn(2+) contacts are provided by aspartate 14, histidine 202, histidine 204, and asparagine 238. Residues 392–523 form a regulatory domain region; it reads RLDYFSVQSG…QHNENNKETV (132 aa).

It belongs to the alpha-IPM synthase/homocitrate synthase family. LeuA type 1 subfamily. Homodimer. Mn(2+) is required as a cofactor.

The protein localises to the cytoplasm. It catalyses the reaction 3-methyl-2-oxobutanoate + acetyl-CoA + H2O = (2S)-2-isopropylmalate + CoA + H(+). Its pathway is amino-acid biosynthesis; L-leucine biosynthesis; L-leucine from 3-methyl-2-oxobutanoate: step 1/4. In terms of biological role, catalyzes the condensation of the acetyl group of acetyl-CoA with 3-methyl-2-oxobutanoate (2-ketoisovalerate) to form 3-carboxy-3-hydroxy-4-methylpentanoate (2-isopropylmalate). The protein is 2-isopropylmalate synthase of Escherichia coli (strain K12 / MC4100 / BW2952).